Consider the following 476-residue polypeptide: Calcitonin gene-related peptide type 1 receptor (476 aa).

Positions 1–33 (METLQMGLLSRSALFKYIIIFLIMINTRGYVLA) are cleaved as a signal peptide. At 34–154 (SQEQEAKTSV…FTHEKVKTAL (121 aa)) the chain is on the extracellular side. Cystine bridges form between Cys-63–Cys-89, Cys-80–Cys-120, and Cys-103–Cys-142. Residues Asn-81, Asn-133, and Asn-138 are each glycosylated (N-linked (GlcNAc...) asparagine). A helical transmembrane segment spans residues 155-179 (NLYYLTIIGHGLSIASLLISLGIFF). At 180 to 190 (YFKNLSCQRIT) the chain is on the cytoplasmic side. Residues 191-213 (LHKNLFFSFVCNSIITIISLSAV) traverse the membrane as a helical segment. Residues 214 to 224 (ANNQALVATNP) lie on the Extracellular side of the membrane. Residues 225-253 (VICKISQFIHLYLMGCNYFWMLCEGIYLH) traverse the membrane as a helical segment. Topologically, residues 254–267 (TLIVVAVFAEKQHL) are cytoplasmic. A helical transmembrane segment spans residues 268 to 288 (MWYYLLGWGFPLIPACIHAVA). Residues 289–304 (RSLYYNDNCWISSETH) lie on the Extracellular side of the membrane. Residues 305–329 (LLYIIHGPICAALLVNLFFLLNIVR) traverse the membrane as a helical segment. The Cytoplasmic segment spans residues 330–344 (VLITKLKVTHQAESN). Residues 345 to 366 (LYMKAVRATLILVPLLGIEFVL) traverse the membrane as a helical segment. Topologically, residues 367–381 (FPWKPEGRIAEEIYD) are extracellular. The chain crosses the membrane as a helical span at residues 382–402 (YVMHILMHYQGLLVATIFCFF). Over 403–476 (NGEVQAVLKR…VFFKTEKQYM (74 aa)) the chain is Cytoplasmic.

It belongs to the G-protein coupled receptor 2 family.

The protein localises to the cell membrane. Its function is as follows. May function as G protein-coupled receptor for calcitonin-gene-related peptides and adrenomedullin. Specificity may be modulated by accessory proteins. May activate cAMP-dependent pathway. The chain is Calcitonin gene-related peptide type 1 receptor (calcrl) from Xenopus laevis (African clawed frog).